The primary structure comprises 487 residues: Cysteine--tRNA ligase (487 aa).

Residue Cys-29 participates in Zn(2+) binding. Residues 31-41 (VTVYDFCHIGH) carry the 'HIGH' region motif. Residues Cys-209, His-234, and Glu-238 each coordinate Zn(2+). A 'KMSKS' region motif is present at residues 266–270 (KMSKS). Position 269 (Lys-269) interacts with ATP.

Belongs to the class-I aminoacyl-tRNA synthetase family. As to quaternary structure, monomer. It depends on Zn(2+) as a cofactor.

It is found in the cytoplasm. The enzyme catalyses tRNA(Cys) + L-cysteine + ATP = L-cysteinyl-tRNA(Cys) + AMP + diphosphate. This chain is Cysteine--tRNA ligase, found in Trichlorobacter lovleyi (strain ATCC BAA-1151 / DSM 17278 / SZ) (Geobacter lovleyi).